The chain runs to 334 residues: Cathepsin J (334 aa).

A signal peptide spans 1 to 17; it reads MTPTVLLLILCFGVASG. Positions 18–113 are cleaved as a propeptide — activation peptide; it reads AQAHDPKLDA…PHAQNHVSIG (96 aa). A glycan (N-linked (GlcNAc...) asparagine) is linked at Asn-72. 2 disulfides stabilise this stretch: Cys-135-Cys-178 and Cys-169-Cys-211. Residue Cys-138 is part of the active site. N-linked (GlcNAc...) asparagine glycans are attached at residues Asn-217, Asn-221, and Asn-268. Cys-269 and Cys-322 are oxidised to a cystine. Catalysis depends on residues His-276 and Asn-300.

Belongs to the peptidase C1 family. In terms of tissue distribution, expressed specifically in placenta.

Its subcellular location is the lysosome. The protein is Cathepsin J (Ctsj) of Mus musculus (Mouse).